A 102-amino-acid polypeptide reads, in one-letter code: Small ribosomal subunit protein uS10 (102 aa).

It belongs to the universal ribosomal protein uS10 family. Part of the 30S ribosomal subunit.

In terms of biological role, involved in the binding of tRNA to the ribosomes. In Chloroflexus aurantiacus (strain ATCC 29366 / DSM 635 / J-10-fl), this protein is Small ribosomal subunit protein uS10.